The primary structure comprises 178 residues: Ribosome maturation factor RimM (178 aa).

The PRC barrel domain maps to Asp-101–Phe-178.

Belongs to the RimM family. In terms of assembly, binds ribosomal protein uS19.

It localises to the cytoplasm. In terms of biological role, an accessory protein needed during the final step in the assembly of 30S ribosomal subunit, possibly for assembly of the head region. Essential for efficient processing of 16S rRNA. May be needed both before and after RbfA during the maturation of 16S rRNA. It has affinity for free ribosomal 30S subunits but not for 70S ribosomes. The polypeptide is Ribosome maturation factor RimM (Pseudomonas fluorescens (strain ATCC BAA-477 / NRRL B-23932 / Pf-5)).